The chain runs to 43 residues: Parvalbumin beta (43 aa).

EF-hand domains follow at residues 1–20 (KVFEILDMDRSFIEEELKLF) and 22–43 (LSSAETAAFLKIGVEEFQALVK). Positions 7, 9, 11, 12, 14, 16, and 37 each coordinate Ca(2+).

In terms of tissue distribution, detected in muscle and cutaneous mucus. In the skin, detected in cells in the basal region of the glandular epithelium of the dermal mucus glands (at protein level).

The protein localises to the cytoplasm. It is found in the secreted. In terms of biological role, in muscle, parvalbumin is thought to be involved in relaxation after contraction. It binds two calcium ions. In Rana temporaria (European common frog), this protein is Parvalbumin beta.